A 527-amino-acid chain; its full sequence is MTAELREAMALAPWGPVKVKKEEEEEENFPGQASSQQVHSENIKVWAPVQGLQTGLDGSEEEEKGQNISWDMAVVLKATQEAPAASTLGSYSLPGTLAKSEILETHGTMNFLGAETKNLQLLVPKTEICEEAEKPLIISERIQKADPQGPELGEACEKGNMLKRQRIKREKKDFRQVIVNDCHLPESFKEEENQKCKKSGGKYSLNSGAVKNPKTQLGQKPFTCSVCGKGFSQSANLVVHQRIHTGEKPFECHECGKAFIQSANLVVHQRIHTGQKPYVCSKCGKAFTQSSNLTVHQKIHSLEKTFKCNECEKAFSYSSQLARHQKVHITEKCYECNECGKTFTRSSNLIVHQRIHTGEKPFACNDCGKAFTQSANLIVHQRSHTGEKPYECKECGKAFSCFSHLIVHQRIHTAEKPYDCSECGKAFSQLSCLIVHQRIHSGDLPYVCNECGKAFTCSSYLLIHQRIHNGEKPYTCNECGKAFRQRSSLTVHQRTHTGEKPYECEKCGAAFISNSHLMRHHRTHLVE.

The tract at residues 9-221 (MALAPWGPVK…NPKTQLGQKP (213 aa)) is globular domain. Residues 16 to 38 (PVKVKKEEEEEENFPGQASSQQV) are disordered. Residues Lys20, Lys21, Lys99, Lys117, Lys125, Lys144, Lys158, Lys189, and Lys214 each participate in a glycyl lysine isopeptide (Lys-Gly) (interchain with G-Cter in SUMO2) cross-link. 2 C2H2-type zinc fingers span residues 222-244 (FTCS…QRIH) and 250-272 (FECH…QRIH). Residue Lys276 forms a Glycyl lysine isopeptide (Lys-Gly) (interchain with G-Cter in SUMO2) linkage. 9 consecutive C2H2-type zinc fingers follow at residues 278–300 (YVCS…QKIH), 306–328 (FKCN…QKVH), 334–356 (YECN…QRIH), 362–384 (FACN…QRSH), 390–412 (YECK…QRIH), 418–440 (YDCS…QRIH), 446–468 (YVCN…QRIH), 474–496 (YTCN…QRTH), and 502–524 (YECE…HRTH).

It belongs to the krueppel C2H2-type zinc-finger protein family.

The protein localises to the nucleus. May be involved in transcriptional regulation. Involved in cell differentiation and/or proliferation. In Homo sapiens (Human), this protein is Zinc finger protein 35 (ZNF35).